The primary structure comprises 282 residues: ATP phosphoribosyltransferase (282 aa).

Belongs to the ATP phosphoribosyltransferase family. Long subfamily. Requires Mg(2+) as cofactor.

The protein localises to the cytoplasm. It catalyses the reaction 1-(5-phospho-beta-D-ribosyl)-ATP + diphosphate = 5-phospho-alpha-D-ribose 1-diphosphate + ATP. The protein operates within amino-acid biosynthesis; L-histidine biosynthesis; L-histidine from 5-phospho-alpha-D-ribose 1-diphosphate: step 1/9. Its activity is regulated as follows. Feedback inhibited by histidine. Its function is as follows. Catalyzes the condensation of ATP and 5-phosphoribose 1-diphosphate to form N'-(5'-phosphoribosyl)-ATP (PR-ATP). Has a crucial role in the pathway because the rate of histidine biosynthesis seems to be controlled primarily by regulation of HisG enzymatic activity. The protein is ATP phosphoribosyltransferase of Halobacterium salinarum (strain ATCC 29341 / DSM 671 / R1).